Consider the following 116-residue polypeptide: Large ribosomal subunit protein eL30 (116 aa).

It belongs to the eukaryotic ribosomal protein eL30 family. In terms of assembly, component of the large ribosomal subunit.

The protein resides in the cytoplasm. Component of the large ribosomal subunit. The ribosome is a large ribonucleoprotein complex responsible for the synthesis of proteins in the cell. The sequence is that of Large ribosomal subunit protein eL30 (rpl30) from Ictalurus punctatus (Channel catfish).